The primary structure comprises 134 residues: Large ribosomal subunit protein bL17 (134 aa).

It belongs to the bacterial ribosomal protein bL17 family. Part of the 50S ribosomal subunit. Contacts protein L32.

The protein is Large ribosomal subunit protein bL17 of Colwellia psychrerythraea (strain 34H / ATCC BAA-681) (Vibrio psychroerythus).